A 95-amino-acid polypeptide reads, in one-letter code: Selenoprotein K (95 aa).

The helical transmembrane segment at L20–L42 threads the bilayer. The disordered stretch occupies residues K47 to R95. Residue U93 is a non-standard amino acid, selenocysteine.

The protein belongs to the selenoprotein K family. As to quaternary structure, interacts with DERL1, DERL2, DERL3 and SELENOS. The SELENOK-SELENOS complex interacts with VCP. Interacts with ZDHHC6. Cleaved by CAPN2/m-calpain in resting macrophages but not in activated macrophages. Macrophage activation up-regulates expression of the calpain inhibitor CAST/calpastatin, resulting in inhibition of CAPN2 activity. In terms of processing, truncated SELENOK proteins produced by failed UGA/Sec decoding are ubiquitinated by the CRL2(KLHDC2) complex, which recognizes the diglycine (Gly-Gly) at the C-terminus of truncated SELENOK proteins.

It localises to the endoplasmic reticulum membrane. The protein resides in the cell membrane. Functionally, required for Ca(2+) flux in immune cells and plays a role in T-cell proliferation and in T-cell and neutrophil migration. Involved in endoplasmic reticulum-associated degradation (ERAD) of soluble glycosylated proteins. Required for palmitoylation and cell surface expression of CD36 and involved in macrophage uptake of low-density lipoprotein and in foam cell formation. Together with ZDHHC6, required for palmitoylation of ITPR1 in immune cells, leading to regulate ITPR1 stability and function. Plays a role in protection of cells from ER stress-induced apoptosis. Protects cells from oxidative stress when overexpressed in cardiomyocytes. This Bos taurus (Bovine) protein is Selenoprotein K.